Consider the following 940-residue polypeptide: Translation initiation factor IF-2 (940 aa).

Low complexity-rich tracts occupy residues 138–147 and 161–208; these read APVEVVAEPE and PVVV…ITEL. Positions 138–354 are disordered; that stretch reads APVEVVAEPE…DRQTFQAPTE (217 aa). Composition is skewed to basic and acidic residues over residues 214–271 and 289–311; these read IAAR…EEAA and AKADDKAGKDAKRGPAREADGAK. Positions 440 to 609 constitute a tr-type G domain; it reads PRAPVVTVMG…LLQAEVLELT (170 aa). Residues 449-456 form a G1 region; that stretch reads GHVDHGKT. 449-456 contacts GTP; the sequence is GHVDHGKT. Positions 474 to 478 are G2; the sequence is GITQH. The tract at residues 495 to 498 is G3; that stretch reads DTPG. GTP is bound by residues 495–499 and 549–552; these read DTPGH and TKID. The G4 stretch occupies residues 549-552; that stretch reads TKID. A G5 region spans residues 585–587; the sequence is SAK.

It belongs to the TRAFAC class translation factor GTPase superfamily. Classic translation factor GTPase family. IF-2 subfamily.

Its subcellular location is the cytoplasm. Functionally, one of the essential components for the initiation of protein synthesis. Protects formylmethionyl-tRNA from spontaneous hydrolysis and promotes its binding to the 30S ribosomal subunits. Also involved in the hydrolysis of GTP during the formation of the 70S ribosomal complex. In Azoarcus sp. (strain BH72), this protein is Translation initiation factor IF-2.